The sequence spans 152 residues: Xanthine-guanine phosphoribosyltransferase (152 aa).

5-phospho-alpha-D-ribose 1-diphosphate-binding positions include 37-38 (RG), arginine 69, and 88-96 (DDLVDTGGT). Arginine 69 lines the GMP pocket. Position 89 (aspartate 89) interacts with Mg(2+). Guanine contacts are provided by aspartate 92 and isoleucine 135. The xanthine site is built by aspartate 92 and isoleucine 135. GMP is bound by residues 92–96 (DTGGT) and 134–135 (WI).

This sequence belongs to the purine/pyrimidine phosphoribosyltransferase family. XGPT subfamily. In terms of assembly, homotetramer. It depends on Mg(2+) as a cofactor.

It is found in the cell inner membrane. The enzyme catalyses GMP + diphosphate = guanine + 5-phospho-alpha-D-ribose 1-diphosphate. The catalysed reaction is XMP + diphosphate = xanthine + 5-phospho-alpha-D-ribose 1-diphosphate. It catalyses the reaction IMP + diphosphate = hypoxanthine + 5-phospho-alpha-D-ribose 1-diphosphate. Its pathway is purine metabolism; GMP biosynthesis via salvage pathway; GMP from guanine: step 1/1. It participates in purine metabolism; XMP biosynthesis via salvage pathway; XMP from xanthine: step 1/1. Purine salvage pathway enzyme that catalyzes the transfer of the ribosyl-5-phosphate group from 5-phospho-alpha-D-ribose 1-diphosphate (PRPP) to the N9 position of the 6-oxopurines guanine and xanthine to form the corresponding ribonucleotides GMP (guanosine 5'-monophosphate) and XMP (xanthosine 5'-monophosphate), with the release of PPi. To a lesser extent, also acts on hypoxanthine. In Shigella boydii serotype 4 (strain Sb227), this protein is Xanthine-guanine phosphoribosyltransferase.